The sequence spans 212 residues: Protein-L-isoaspartate O-methyltransferase (212 aa).

The active site involves S60.

It belongs to the methyltransferase superfamily. L-isoaspartyl/D-aspartyl protein methyltransferase family.

Its subcellular location is the cytoplasm. The catalysed reaction is [protein]-L-isoaspartate + S-adenosyl-L-methionine = [protein]-L-isoaspartate alpha-methyl ester + S-adenosyl-L-homocysteine. In terms of biological role, catalyzes the methyl esterification of L-isoaspartyl residues in peptides and proteins that result from spontaneous decomposition of normal L-aspartyl and L-asparaginyl residues. It plays a role in the repair and/or degradation of damaged proteins. This Methanococcus maripaludis (strain C7 / ATCC BAA-1331) protein is Protein-L-isoaspartate O-methyltransferase.